Reading from the N-terminus, the 312-residue chain is Olfactory receptor 2J1 (312 aa).

Residues 1–26 (MLMKKNASFEDFFLLLGFSNWPHLEV) lie on the Extracellular side of the membrane. Asparagine 6 carries N-linked (GlcNAc...) asparagine glycosylation. The chain crosses the membrane as a helical span at residues 27–50 (VLFVVILIFYLITLIGNLFIIILS). At 51–58 (YLDSHLHT) the chain is on the cytoplasmic side. The chain crosses the membrane as a helical span at residues 59–80 (PMYFFLSNLSFLDLCYTTSSIP). Topologically, residues 81 to 101 (QLLVNLWGPEKTISYAGCTVQ) are extracellular. Cysteines 98 and 190 form a disulfide. The chain crosses the membrane as a helical span at residues 102–121 (LYFVLALGTAECVLLVVMSY). At 122-140 (DRYAAVCRPLHYTVLMHPR) the chain is on the cytoplasmic side. The helical transmembrane segment at 141–159 (FCRLLAAASWVSGFTTSAL) threads the bilayer. Over 160-196 (HSSFTFWIPLCRHRLVDHFFCEVPALLRLSCVDTQAN) the chain is Extracellular. The helical transmembrane segment at 197-220 (ELTLMVMSSIFVLIPLILILTSYG) threads the bilayer. Topologically, residues 221-237 (AIARAVLSMQSTTGLQK) are cytoplasmic. A helical membrane pass occupies residues 238–260 (VLRTCGAHLMVVSLFFIPVMCMY). The Extracellular portion of the chain corresponds to 261 to 273 (LQPPSENSQDQGK). A helical membrane pass occupies residues 274 to 293 (FIALFYTVVTPSLNPLIYTF). Topologically, residues 294 to 312 (RNKDVRGAVKRLMGWEWGM) are cytoplasmic.

It belongs to the G-protein coupled receptor 1 family.

It localises to the cell membrane. Odorant receptor. The chain is Olfactory receptor 2J1 (OR2J1) from Homo sapiens (Human).